The chain runs to 497 residues: Galactose-1-phosphate uridylyltransferase (497 aa).

It belongs to the galactose-1-phosphate uridylyltransferase type 2 family.

Its subcellular location is the cytoplasm. The enzyme catalyses alpha-D-galactose 1-phosphate + UDP-alpha-D-glucose = alpha-D-glucose 1-phosphate + UDP-alpha-D-galactose. It participates in carbohydrate metabolism; galactose metabolism. The polypeptide is Galactose-1-phosphate uridylyltransferase (Enterococcus faecalis (strain ATCC 700802 / V583)).